A 257-amino-acid chain; its full sequence is Ditrans,polycis-undecaprenyl-diphosphate synthase ((2E,6E)-farnesyl-diphosphate specific) (257 aa).

D34 is a catalytic residue. D34 contacts Mg(2+). Residues 35 to 38 (GNGR), W39, R47, and H51 contribute to the substrate site. The Proton acceptor role is filled by N82. Substrate-binding positions include W83, R85, R201, and 207-209 (RLS). E220 contributes to the Mg(2+) binding site.

The protein belongs to the UPP synthase family. Homodimer. The cofactor is Mg(2+).

The enzyme catalyses 8 isopentenyl diphosphate + (2E,6E)-farnesyl diphosphate = di-trans,octa-cis-undecaprenyl diphosphate + 8 diphosphate. Functionally, catalyzes the sequential condensation of isopentenyl diphosphate (IPP) with (2E,6E)-farnesyl diphosphate (E,E-FPP) to yield (2Z,6Z,10Z,14Z,18Z,22Z,26Z,30Z,34E,38E)-undecaprenyl diphosphate (di-trans,octa-cis-UPP). UPP is the precursor of glycosyl carrier lipid in the biosynthesis of bacterial cell wall polysaccharide components such as peptidoglycan and lipopolysaccharide. The chain is Ditrans,polycis-undecaprenyl-diphosphate synthase ((2E,6E)-farnesyl-diphosphate specific) from Francisella tularensis subsp. tularensis (strain SCHU S4 / Schu 4).